Consider the following 305-residue polypeptide: Carbamate kinase (305 aa).

The protein belongs to the carbamate kinase family.

It localises to the cytoplasm. The enzyme catalyses hydrogencarbonate + NH4(+) + ATP = carbamoyl phosphate + ADP + H2O + H(+). It functions in the pathway metabolic intermediate metabolism; carbamoyl phosphate degradation; CO(2) and NH(3) from carbamoyl phosphate: step 1/1. The chain is Carbamate kinase (arcC) from Thermoplasma volcanium (strain ATCC 51530 / DSM 4299 / JCM 9571 / NBRC 15438 / GSS1).